Reading from the N-terminus, the 96-residue chain is U-reduvitoxin-Pr12a (96 aa).

The signal sequence occupies residues 1–20 (MKTALLLFFALVFIAFETEA). Intrachain disulfides connect C21/C38, C33/C53, and C36/C47. 2 Pacifastin domains span residues 21–55 (CRPG…ICPP) and 59–94 (KLEC…CIHK). The pro-Pro-Arg motif necessary for proteolytic processing stretch occupies residues 54-56 (PPR). 3 disulfide bridges follow: C62–C77, C72–C91, and C75–C86.

Belongs to the protease inhibitor I19 family. As to expression, expressed by the venom gland.

The protein localises to the secreted. Its function is as follows. Inhibits trypsin activity and prophenoloxidase (PPO) activation, an enzyme essential for both clotting and insect innate immune responses. It does not inhibit activity of chymotrypsin and protease K, and has no effect on phenoloxidase (PO) activity. This chain is U-reduvitoxin-Pr12a, found in Platymeris rhadamanthus (Red spot assassin bug).